A 129-amino-acid polypeptide reads, in one-letter code: uncharacterized protein (129 aa).

This is an uncharacterized protein from Clostridium perfringens (strain 13 / Type A).